We begin with the raw amino-acid sequence, 269 residues long: Tropinone reductase homolog At2g29320 (269 aa).

Leu-19–His-43 is a binding site for NADP(+). Residue Ser-152 participates in substrate binding. The active-site Proton acceptor is Tyr-166.

Belongs to the short-chain dehydrogenases/reductases (SDR) family. SDR65C subfamily.

The polypeptide is Tropinone reductase homolog At2g29320 (Arabidopsis thaliana (Mouse-ear cress)).